The primary structure comprises 498 residues: Probable cytosol aminopeptidase (498 aa).

Mn(2+) contacts are provided by Lys264 and Asp269. The active site involves Lys276. 3 residues coordinate Mn(2+): Asp287, Asp346, and Glu348. Arg350 is an active-site residue.

The protein belongs to the peptidase M17 family. Requires Mn(2+) as cofactor.

It is found in the cytoplasm. The enzyme catalyses Release of an N-terminal amino acid, Xaa-|-Yaa-, in which Xaa is preferably Leu, but may be other amino acids including Pro although not Arg or Lys, and Yaa may be Pro. Amino acid amides and methyl esters are also readily hydrolyzed, but rates on arylamides are exceedingly low.. It catalyses the reaction Release of an N-terminal amino acid, preferentially leucine, but not glutamic or aspartic acids.. In terms of biological role, presumably involved in the processing and regular turnover of intracellular proteins. Catalyzes the removal of unsubstituted N-terminal amino acids from various peptides. The sequence is that of Probable cytosol aminopeptidase from Rhizobium rhizogenes (strain K84 / ATCC BAA-868) (Agrobacterium radiobacter).